The primary structure comprises 113 residues: Heavy metal-associated isoprenylated plant protein 15 (113 aa).

The 65-residue stretch at 1–65 (MIVWMGVYDQ…KWGKAKLTLY (65 aa)) folds into the HMA domain. Positions 69–89 (DALKEAKIAEAKQKREEIERE) form a coiled coil. The residue at position 110 (Cys-110) is a Cysteine methyl ester. The S-farnesyl cysteine moiety is linked to residue Cys-110. The propeptide at 111-113 (VIC) is removed in mature form.

The protein belongs to the HIPP family. In terms of tissue distribution, expressed in embryo sacs.

In terms of biological role, probable heavy-metal-binding protein. The polypeptide is Heavy metal-associated isoprenylated plant protein 15 (Arabidopsis thaliana (Mouse-ear cress)).